A 49-amino-acid polypeptide reads, in one-letter code: Osteocalcin (49 aa).

The region spanning 1 to 47 is the Gla domain; that stretch reads YLDHWLGAPAPYPDPLEPRREVCELNPDCDELADHIGFQEAYRRFYG. Pro-9 is modified (hydroxyproline). Glu-17, Glu-21, Glu-24, and Asp-30 together coordinate Ca(2+). Residues Glu-17, Glu-21, and Glu-24 each carry the 4-carboxyglutamate modification. A disulfide bridge connects residues Cys-23 and Cys-29.

Belongs to the osteocalcin/matrix Gla protein family. In terms of processing, gamma-carboxyglutamate residues are formed by vitamin K dependent carboxylation by GGCX. These residues are essential for the binding of calcium. Decarboxylation promotes the hormone activity.

It is found in the secreted. Functionally, the carboxylated form is one of the main organic components of the bone matrix, which constitutes 1-2% of the total bone protein. It acts as a negative regulator of bone formation and is required to limit bone formation without impairing bone resorption or mineralization. The carboxylated form binds strongly to apatite and calcium. Its function is as follows. The uncarboxylated form acts as a hormone secreted by osteoblasts, which regulates different cellular processes, such as energy metabolism, male fertility and brain development. Regulates of energy metabolism by acting as a hormone favoring pancreatic beta-cell proliferation, insulin secretion and sensitivity and energy expenditure. Uncarboxylated osteocalcin hormone also promotes testosterone production in the testes: acts as a ligand for G protein-coupled receptor GPRC6A at the surface of Leydig cells, initiating a signaling response that promotes the expression of enzymes required for testosterone synthesis in a CREB-dependent manner. Also acts as a regulator of brain development: osteocalcin hormone crosses the blood-brain barrier and acts as a ligand for GPR158 on neurons, initiating a signaling response that prevents neuronal apoptosis in the hippocampus, favors the synthesis of all monoamine neurotransmitters and inhibits that of gamma-aminobutyric acid (GABA). Osteocalcin also crosses the placenta during pregnancy and maternal osteocalcin is required for fetal brain development. The polypeptide is Osteocalcin (BGLAP) (Equus caballus (Horse)).